A 135-amino-acid polypeptide reads, in one-letter code: Large ribosomal subunit protein uL16 (135 aa).

The protein belongs to the universal ribosomal protein uL16 family. As to quaternary structure, part of the 50S ribosomal subunit.

Functionally, binds 23S rRNA and is also seen to make contacts with the A and possibly P site tRNAs. This chain is Large ribosomal subunit protein uL16, found in Desulfatibacillum aliphaticivorans.